The following is a 300-amino-acid chain: Protoheme IX farnesyltransferase (300 aa).

9 helical membrane-spanning segments follow: residues 31-51 (VMSL…NSLH), 52-72 (PFIS…AGAI), 92-112 (IVRG…MAFF), 123-145 (FLSA…MWLK), 152-172 (IVIG…SVSG), 179-199 (VILF…LALF), 225-245 (ILIY…VGMS), 247-267 (IIYL…SISL), and 280-300 (FFAY…FCRV).

The protein belongs to the UbiA prenyltransferase family. Protoheme IX farnesyltransferase subfamily.

It localises to the cell inner membrane. It carries out the reaction heme b + (2E,6E)-farnesyl diphosphate + H2O = Fe(II)-heme o + diphosphate. It functions in the pathway porphyrin-containing compound metabolism; heme O biosynthesis; heme O from protoheme: step 1/1. Converts heme B (protoheme IX) to heme O by substitution of the vinyl group on carbon 2 of heme B porphyrin ring with a hydroxyethyl farnesyl side group. This chain is Protoheme IX farnesyltransferase, found in Rickettsia bellii (strain OSU 85-389).